The primary structure comprises 164 residues: ATP synthase subunit b (164 aa).

Residues Gly6–Ile26 form a helical membrane-spanning segment.

The protein belongs to the ATPase B chain family. F-type ATPases have 2 components, F(1) - the catalytic core - and F(0) - the membrane proton channel. F(1) has five subunits: alpha(3), beta(3), gamma(1), delta(1), epsilon(1). F(0) has three main subunits: a(1), b(2) and c(10-14). The alpha and beta chains form an alternating ring which encloses part of the gamma chain. F(1) is attached to F(0) by a central stalk formed by the gamma and epsilon chains, while a peripheral stalk is formed by the delta and b chains.

It localises to the cell membrane. In terms of biological role, f(1)F(0) ATP synthase produces ATP from ADP in the presence of a proton or sodium gradient. F-type ATPases consist of two structural domains, F(1) containing the extramembraneous catalytic core and F(0) containing the membrane proton channel, linked together by a central stalk and a peripheral stalk. During catalysis, ATP synthesis in the catalytic domain of F(1) is coupled via a rotary mechanism of the central stalk subunits to proton translocation. Functionally, component of the F(0) channel, it forms part of the peripheral stalk, linking F(1) to F(0). The protein is ATP synthase subunit b of Streptococcus pneumoniae serotype 2 (strain D39 / NCTC 7466).